We begin with the raw amino-acid sequence, 275 residues long: Elongation factor Ts (275 aa).

An Isoglutamyl lysine isopeptide (Lys-Gln) (interchain with Q-Cter in protein Pup) cross-link involves residue Lys-36. An involved in Mg(2+) ion dislocation from EF-Tu region spans residues 76 to 79; it reads TDFV.

This sequence belongs to the EF-Ts family.

Its subcellular location is the cytoplasm. Functionally, associates with the EF-Tu.GDP complex and induces the exchange of GDP to GTP. It remains bound to the aminoacyl-tRNA.EF-Tu.GTP complex up to the GTP hydrolysis stage on the ribosome. In Mycolicibacterium smegmatis (strain ATCC 700084 / mc(2)155) (Mycobacterium smegmatis), this protein is Elongation factor Ts.